The following is a 251-amino-acid chain: Triosephosphate isomerase (251 aa).

The substrate site is built by asparagine 10 and lysine 12. Histidine 95 functions as the Electrophile in the catalytic mechanism. Catalysis depends on glutamate 167, which acts as the Proton acceptor.

The protein belongs to the triosephosphate isomerase family. As to quaternary structure, homodimer.

It carries out the reaction D-glyceraldehyde 3-phosphate = dihydroxyacetone phosphate. It functions in the pathway carbohydrate biosynthesis; gluconeogenesis. The protein operates within carbohydrate degradation; glycolysis; D-glyceraldehyde 3-phosphate from glycerone phosphate: step 1/1. This Coprinopsis cinerea (strain Okayama-7 / 130 / ATCC MYA-4618 / FGSC 9003) (Inky cap fungus) protein is Triosephosphate isomerase (TPI).